Here is a 232-residue protein sequence, read N- to C-terminus: Probable dihydroorotate dehydrogenase B (NAD(+)), electron transfer subunit (232 aa).

One can recognise an FAD-binding FR-type domain in the interval 1-86 (MYYTRITQIE…RGAFGSAFTP (86 aa)). The [2Fe-2S] cluster site is built by Cys-202, Cys-207, Cys-210, and Cys-219.

This sequence belongs to the PyrK family. In terms of assembly, heterotetramer of 2 PyrK and 2 PyrD type B subunits. [2Fe-2S] cluster serves as cofactor. The cofactor is FAD.

The protein operates within pyrimidine metabolism; UMP biosynthesis via de novo pathway; orotate from (S)-dihydroorotate (NAD(+) route): step 1/1. Responsible for channeling the electrons from the oxidation of dihydroorotate from the FMN redox center in the PyrD type B subunit to the ultimate electron acceptor NAD(+). The sequence is that of Probable dihydroorotate dehydrogenase B (NAD(+)), electron transfer subunit from Archaeoglobus fulgidus (strain ATCC 49558 / DSM 4304 / JCM 9628 / NBRC 100126 / VC-16).